Here is a 126-residue protein sequence, read N- to C-terminus: MAPGEVTITVRLIRSFEHRNFKPVVYHGVNLDQTVKEFIVFLKQDIPLRTNLPPPFRNYKYDALKIIHQAHKSKTNELVLSLEDDERLLLKEDSTLKAAGIASETEIAFFCEEDYKNYKANPISSW.

It belongs to the UPF0538 family.

This is UPF0538 protein C2orf76 (C2orf76) from Homo sapiens (Human).